We begin with the raw amino-acid sequence, 638 residues long: Probable potassium transport system protein Kup (638 aa).

12 consecutive transmembrane segments (helical) span residues 25 to 45 (LAIAAIGVVFGDIGTSPLYSL), 65 to 85 (VISLLFWAILLVVGVKYLLFV), 114 to 134 (AGALMALGIFGACMFYGDAVI), 152 to 172 (PHLSHLVLPITIVILIALFWI), 184 to 204 (FGPIMVLWFVVIAALGVYHIV), 226 to 246 (LLQAYVVLGSVVLVLTGAEAL), 262 to 282 (AYGLVMPSLVLNYFGQGALLI), 291 to 311 (PFFLLAPEWGLLPLVVLSTVA), 352 to 372 (IYVPVVNWLLLAVILCIVVGF), 382 to 402 (YGIAVTATMVITTVLACVVMV), 410 to 430 (LLVGAIIAVFLAIDLGFFGAN), and 434 to 454 (VAQGGWLPLGIGALLFFLLMT).

This sequence belongs to the HAK/KUP transporter (TC 2.A.72) family.

It is found in the cell inner membrane. The catalysed reaction is K(+)(in) + H(+)(in) = K(+)(out) + H(+)(out). Functionally, transport of potassium into the cell. Likely operates as a K(+):H(+) symporter. The sequence is that of Probable potassium transport system protein Kup from Burkholderia cenocepacia (strain HI2424).